The following is a 586-amino-acid chain: MVGIPGPYQFTGDKRVPAMPGSPMEVKIHSRSSPPIMAPLPPVNPGGLRPVGFPPSSHSNGINHSPPTLNGAPSPPQRSSNGPSSSSSSSLANQQLPATCGVRQLSKLKRFLTTLQQFGNDISPEIGEKVRTLVLALVNSTVTIEEFHCKLQEATNFPLRPFVIPFLKANLPLLQRELLHCARAGKQTPSQYLAQHEHILLNTSTSSPADSSELLMEMNGNGKRHSPDRREEERETAPAEPPVKRVCTISPAPRHSPALSLPLVNSTSHFHPTPPPLQHYSLEDIPSSQLYRDHLNKIGEHRDVRDRHHSSGVNGNLNNGYQEELVDHRLTEREWAEEWKHLDHALNCIMEMVEKTRRSMAVLRRCQEVDRDELNYWKRRFNESNEIRKGSEHPSRQHSPSSTDSGASDSVRDFGSRTGAGYVTDEIWRKAEEAVNEVKRQAMSEVQKAVSEAEQKAFEMIASERARMEQTIVDAKRRAAEDAVLVVNEQEESTESCWNCGRKASETCSGCNIARYCGSFCQHKDWEKHHRICGQSMHTQAKPLTPSRSLIPKASDPVLLSPTLERSSSATSRSSTPASVTAVDGL.

Residues 1 to 95 (MVGIPGPYQF…SSSSSLANQQ (95 aa)) are disordered. Positions 56 to 68 (SSHSNGINHSPPT) are enriched in polar residues. Residues 77–90 (QRSSNGPSSSSSSS) show a composition bias toward low complexity. The 96-residue stretch at 102–197 (VRQLSKLKRF…TPSQYLAQHE (96 aa)) folds into the TAFH domain. Disordered regions lie at residues 204–242 (STSSPADSSELLMEMNGNGKRHSPDRREEERETAPAEPP) and 387–417 (IRKGSEHPSRQHSPSSTDSGASDSVRDFGSR). Over residues 228–237 (DRREEERETA) the composition is skewed to basic and acidic residues. The segment covering 399 to 409 (SPSSTDSGASD) has biased composition (low complexity). A coiled-coil region spans residues 429–481 (RKAEEAVNEVKRQAMSEVQKAVSEAEQKAFEMIASERARMEQTIVDAKRRAAE). Cys497, Cys500, Cys508, Cys511, Cys517, Cys521, His529, and Cys533 together coordinate Zn(2+). Residues 497–533 (CWNCGRKASETCSGCNIARYCGSFCQHKDWEKHHRIC) form an MYND-type zinc finger. The interval 561-586 (SPTLERSSSATSRSSTPASVTAVDGL) is disordered. Residues 566–586 (RSSSATSRSSTPASVTAVDGL) are compositionally biased toward low complexity.

It localises to the nucleus. Its function is as follows. May act as a transcriptional corepressor. The chain is Protein CBFA2T2 (cbfa2t2) from Xenopus laevis (African clawed frog).